A 487-amino-acid polypeptide reads, in one-letter code: E3 ubiquitin-protein ligase RNF8 (487 aa).

Positions 38–92 constitute an FHA domain; sequence VTVGRGFGVTYQLVSKICPLMISRNHCILKQNAEGQWTIKDNKSLNGVWLNRERL. The required for interaction with PIWIL1 stretch occupies residues 68 to 72; sequence QNAEG. Disordered stretches follow at residues 143–176 and 182–201; these read MMEK…KSKI and EPGQ…QPSE. S157 is subject to Phosphoserine. The RING-type zinc finger occupies 405–443; that stretch reads CIICSEYFVEAVTLNCAHSFCSYCINEWMKRKVECPICR.

This sequence belongs to the RNF8 family. As to quaternary structure, homodimer. Forms a E2-E3 ubiquitin ligase complex composed of the RNF8 homodimer and a E2 heterodimer of UBE2N and UBE2V2. Interacts with class III E2s, including UBE2E1, UBE2E2, and UBE2E3 and with UBE2N. Interacts with RXRA. Interacts (via FHA domain) with phosphorylated HERC2 (via C-terminus). Interacts with PIWIL1; leading to sequester RNF8 in the cytoplasm. Interacts with WRAP53/TCAB1. In terms of processing, autoubiquitinated through 'Lys-48' and 'Lys-63' of ubiquitin. 'Lys-63' polyubiquitination is mediated by UBE2N. 'Lys-29'-type polyubiquitination is also observed, but it doesn't require its own functional RING-type zinc finger.

Its subcellular location is the nucleus. The protein localises to the cytoplasm. It localises to the midbody. The protein resides in the chromosome. It is found in the telomere. The enzyme catalyses S-ubiquitinyl-[E2 ubiquitin-conjugating enzyme]-L-cysteine + [acceptor protein]-L-lysine = [E2 ubiquitin-conjugating enzyme]-L-cysteine + N(6)-ubiquitinyl-[acceptor protein]-L-lysine.. It functions in the pathway protein modification; protein ubiquitination. In terms of biological role, E3 ubiquitin-protein ligase that plays a key role in DNA damage signaling via 2 distinct roles: by mediating the 'Lys-63'-linked ubiquitination of histones H2A and H2AX and promoting the recruitment of DNA repair proteins at double-strand breaks (DSBs) sites, and by catalyzing 'Lys-48'-linked ubiquitination to remove target proteins from DNA damage sites. Following DNA DSBs, it is recruited to the sites of damage by ATM-phosphorylated MDC1 and catalyzes the 'Lys-63'-linked ubiquitination of histones H2A and H2AX, thereby promoting the formation of TP53BP1 and BRCA1 ionizing radiation-induced foci (IRIF). Also controls the recruitment of UIMC1-BRCC3 (RAP80-BRCC36) and PAXIP1/PTIP to DNA damage sites. Promotes the recruitment of NBN to DNA damage sites by catalyzing 'Lys-6'-linked ubiquitination of NBN. Also recruited at DNA interstrand cross-links (ICLs) sites and catalyzes 'Lys-63'-linked ubiquitination of histones H2A and H2AX, leading to recruitment of FAAP20 and Fanconi anemia (FA) complex, followed by interstrand cross-link repair. H2A ubiquitination also mediates the ATM-dependent transcriptional silencing at regions flanking DSBs in cis, a mechanism to avoid collision between transcription and repair intermediates. Promotes the formation of 'Lys-63'-linked polyubiquitin chains via interactions with the specific ubiquitin-conjugating UBE2N/UBC13 and ubiquitinates non-histone substrates such as PCNA. Substrates that are polyubiquitinated at 'Lys-63' are usually not targeted for degradation. Also catalyzes the formation of 'Lys-48'-linked polyubiquitin chains via interaction with the ubiquitin-conjugating UBE2L6/UBCH8, leading to degradation of substrate proteins such as CHEK2, JMJD2A/KDM4A and KU80/XRCC5: it is still unclear how the preference toward 'Lys-48'- versus 'Lys-63'-linked ubiquitination is regulated but it could be due to RNF8 ability to interact with specific E2 specific ligases. For instance, interaction with phosphorylated HERC2 promotes the association between RNF8 and UBE2N/UBC13 and favors the specific formation of 'Lys-63'-linked ubiquitin chains. Promotes non-homologous end joining (NHEJ) by promoting the 'Lys-48'-linked ubiquitination and degradation the of KU80/XRCC5. Following DNA damage, mediates the ubiquitination and degradation of JMJD2A/KDM4A in collaboration with RNF168, leading to unmask H4K20me2 mark and promote the recruitment of TP53BP1 at DNA damage sites. Following DNA damage, mediates the ubiquitination and degradation of POLD4/p12, a subunit of DNA polymerase delta. In the absence of POLD4, DNA polymerase delta complex exhibits higher proofreading activity. In addition to its function in damage signaling, also plays a role in higher-order chromatin structure by mediating extensive chromatin decondensation. Involved in the activation of ATM by promoting histone H2B ubiquitination, which indirectly triggers histone H4 'Lys-16' acetylation (H4K16ac), establishing a chromatin environment that promotes efficient activation of ATM kinase. Required in the testis, where it plays a role in the replacement of histones during spermatogenesis. At uncapped telomeres, promotes the joining of deprotected chromosome ends by inducing H2A ubiquitination and TP53BP1 recruitment, suggesting that it may enhance cancer development by aggravating telomere-induced genome instability in case of telomeric crisis. Promotes the assembly of RAD51 at DNA DSBs in the absence of BRCA1 and TP53BP1 Also involved in class switch recombination in immune system, via its role in regulation of DSBs repair. May be required for proper exit from mitosis after spindle checkpoint activation and may regulate cytokinesis. May play a role in the regulation of RXRA-mediated transcriptional activity. Not involved in RXRA ubiquitination by UBE2E2. In Bos taurus (Bovine), this protein is E3 ubiquitin-protein ligase RNF8.